A 311-amino-acid chain; its full sequence is Ribosomal RNA small subunit methyltransferase H (311 aa).

Residues 32 to 34, aspartate 52, phenylalanine 78, aspartate 99, and glutamine 106 contribute to the S-adenosyl-L-methionine site; that span reads GGH.

Belongs to the methyltransferase superfamily. RsmH family.

The protein resides in the cytoplasm. It carries out the reaction cytidine(1402) in 16S rRNA + S-adenosyl-L-methionine = N(4)-methylcytidine(1402) in 16S rRNA + S-adenosyl-L-homocysteine + H(+). Specifically methylates the N4 position of cytidine in position 1402 (C1402) of 16S rRNA. This is Ribosomal RNA small subunit methyltransferase H from Halothermothrix orenii (strain H 168 / OCM 544 / DSM 9562).